The chain runs to 491 residues: MPPRLASVKIPYDWGRKGPFRFWRIFCQSRAVGWFLAAACGRAGRFRTQPAEWPTPDAVFSPLGLALFQDRHDGASNGTARLPQLGTVGQSPYTSAPPLSHTPNADFQPPYFPPPYQPIYPQSQDPYSHVNDPYSLNPLHAQPQPQHPGWPGQRQSQESGLLHTHRGLPHQLSGLDPRRDYRRHEDLLHGPHGLGSGLGDLPIHSLPHAIEDVPHVEDPGINIPDQTVIKKGPVSLSKSNSNAVSSIPINKDNLFGGVVNPNEVFCSVPGRLSLLSSTSKYKVTVAEVQRRLSPPECLNASLLGGVLRRAKSKNGGRSLREKLDKIGLNLPAGRRKAANVTLLTSLVEGEAVHLARDFGYVCETEFPAKAVAEFLNRQHSDPNEQVTRKNMLLATKQICKEFTDLLAQDRSPLGNSRPNPILEPGIQSCLTHFNLISHGFGSPAVCAAVTALQNYLTEALKAMDKMYLSNNPNSHTDNSAKSSDKEEKHRK.

The disordered stretch occupies residues 74–161 (GASNGTARLP…GQRQSQESGL (88 aa)). The short motif at 111 to 116 (YFPPPY) is the PPxY motif element. Composition is skewed to low complexity over residues 119–128 (IYPQSQDPYS) and 142–155 (QPQP…GQRQ). Residues Lys231 and Lys238 each participate in a glycyl lysine isopeptide (Lys-Gly) (interchain with G-Cter in SUMO2) cross-link. Ser293 carries the post-translational modification Phosphoserine; by PKA. Positions 334 to 464 (RRKAANVTLL…YLTEALKAMD (131 aa)) are H-S-H (helix-span-helix), dimerization. Over residues 468–481 (LSNNPNSHTDNSAK) the composition is skewed to polar residues. Residues 468-491 (LSNNPNSHTDNSAKSSDKEEKHRK) form a disordered region. Over residues 482 to 491 (SSDKEEKHRK) the composition is skewed to basic and acidic residues.

It belongs to the AP-2 family. As to quaternary structure, binds DNA as a dimer. Can form homodimers or heterodimers with other AP-2 family members. Interacts with WWOX. Interacts with CITED4. Interacts with UBE2I. Interacts with RALBP1 in a complex also containing EPN1 and NUMB during interphase and mitosis. Interacts with KCTD1; this interaction represses transcription activation. Interacts (via C-terminus) with CITED2 (via C-terminus); the interaction stimulates TFAP2A-transcriptional activation. Interacts (via N-terminus) with EP300 (via N-terminus); the interaction requires CITED2. Interacts with KCTD15; this interaction inhibits TFAP2A transcriptional activation.

It is found in the nucleus. Functionally, sequence-specific DNA-binding protein that interacts with inducible viral and cellular enhancer elements to regulate transcription of selected genes. AP-2 factors bind to the consensus sequence 5'-GCCNNNGGC-3' and activate genes involved in a large spectrum of important biological functions including proper eye, face, body wall, limb and neural tube development. They also suppress a number of genes including MCAM/MUC18, C/EBP alpha and MYC. AP-2-alpha is the only AP-2 protein required for early morphogenesis of the lens vesicle. Together with the CITED2 coactivator, stimulates the PITX2 P1 promoter transcription activation. Associates with chromatin to the PITX2 P1 promoter region. In Ovis aries (Sheep), this protein is Transcription factor AP-2-alpha (TFAP2A).